The following is a 192-amino-acid chain: Imidazoleglycerol-phosphate dehydratase (192 aa).

Belongs to the imidazoleglycerol-phosphate dehydratase family.

The protein resides in the cytoplasm. It carries out the reaction D-erythro-1-(imidazol-4-yl)glycerol 3-phosphate = 3-(imidazol-4-yl)-2-oxopropyl phosphate + H2O. It participates in amino-acid biosynthesis; L-histidine biosynthesis; L-histidine from 5-phospho-alpha-D-ribose 1-diphosphate: step 6/9. The protein is Imidazoleglycerol-phosphate dehydratase of Staphylococcus epidermidis (strain ATCC 35984 / DSM 28319 / BCRC 17069 / CCUG 31568 / BM 3577 / RP62A).